A 539-amino-acid polypeptide reads, in one-letter code: Glycerophosphoinositol inositolphosphodiesterase GDPD2 (539 aa).

At 1–38 the chain is on the cytoplasmic side; it reads MAESPGCCSVWARCLHCLYSCHWRKCPRERMQTSKCDC. A helical transmembrane segment spans residues 39 to 59; sequence IWFGLLFLTFLLSLSWLYIGL. The Extracellular segment spans residues 60–85; it reads VLLNDLHNFNEFLFRRWGHWMDWSLA. The helical transmembrane segment at 86-106 threads the bilayer; sequence FLLVISLLVTYASLLLVLALL. The Cytoplasmic portion of the chain corresponds to 107–121; the sequence is LRLCRQPLHLHSLHK. Residues 122–142 form a helical membrane-spanning segment; sequence VLLLLIMLLVAAGLVGLDIQW. Residues 143–154 lie on the Extracellular side of the membrane; it reads QQEWHSLRVSLQ. The helical transmembrane segment at 155–175 threads the bilayer; it reads ATAPFLHIGAAAGIALLAWPV. Residues 176–188 lie on the Cytoplasmic side of the membrane; sequence ADTFYRIHRRGPK. A helical membrane pass occupies residues 189 to 209; it reads ILLLLLFFGVVLVIYLAPLCI. Over 210–490 the chain is Extracellular; sequence SSPCIMEPRD…PIWLITPQTY (281 aa). The GP-PDE domain occupies 224–479; it reads PGLVGHRGAP…NDCQLLQQMR (256 aa). Residues Glu256, Asp258, and His271 each coordinate a divalent metal cation. Asn442 carries N-linked (GlcNAc...) asparagine glycosylation. The helical transmembrane segment at 491-511 threads the bilayer; it reads LIIWVITNCVSTMLLLWTFLL. At 512–539 the chain is on the cytoplasmic side; that stretch reads QRRFVKKRGKTGLETAVLLTRINNFMME.

Belongs to the glycerophosphoryl diester phosphodiesterase family. It depends on Ca(2+) as a cofactor.

It localises to the cell membrane. It is found in the cytoplasm. Its subcellular location is the cytoskeleton. The catalysed reaction is sn-glycero-3-phospho-1D-myo-inositol + H2O = 1D-myo-inositol 1-phosphate + glycerol + H(+). Its function is as follows. Has glycerophosphoinositol inositolphosphodiesterase activity and specifically hydrolyzes glycerophosphoinositol, with no activity for other substrates such as glycerophosphoinositol 4-phosphate, glycerophosphocholine, glycerophosphoethanolamine, and glycerophosphoserine. Accelerates the program of osteoblast differentiation and growth. May play a role in remodeling of the actin cytoskeleton. This chain is Glycerophosphoinositol inositolphosphodiesterase GDPD2 (GDPD2), found in Homo sapiens (Human).